Here is a 159-residue protein sequence, read N- to C-terminus: Nucleotide-binding protein PST_3153 (159 aa).

The protein belongs to the YajQ family.

Nucleotide-binding protein. The chain is Nucleotide-binding protein PST_3153 from Stutzerimonas stutzeri (strain A1501) (Pseudomonas stutzeri).